The sequence spans 319 residues: MKTRIVSSVTTTLLLGSILMNPVANAADSDINIKTGTTDIGSNTTVKTGDLVTYDKENGMHKKVFYSFIDDKNHNKKLLVIRTKGTIAGQYRVYSEEGANKSGLAWPSAFKVQLQLPDNEVAQISDYYPRNSIDTKEYMSTLTYGFNGNVTGDDTGKIGGLIGANVSIGHTLKYVQPDFKTILESPTDKKVGWKVIFNNMVNQNWGPYDRDSWNPVYGNQLFMKTRNGSMKAADNFLDPNKASSLLSSGFSPDFATVITMDRKASKQQTNIDVIYERVRDDYQLHWTSTNWKGTNTKDKWIDRSSERYKIDWEKEEMTN.

The N-terminal stretch at 1-26 (MKTRIVSSVTTTLLLGSILMNPVANA) is a signal peptide.

Belongs to the aerolysin family. As to quaternary structure, self-assembles to form first a non-lytic oligomeric intermediate and then, a mushroom-shaped homoheptamer structure of 100 Angstroms in length and up to 100 Angstroms in diameter.

It is found in the secreted. Functionally, alpha-toxin binds to the membrane of eukaryotic cells resulting in the release of low-molecular weight molecules and leading to an eventual osmotic lysis. Inhibits host neutrophil chemotaxis to the lesion region. Heptamer oligomerization and pore formation is required for lytic activity. The chain is Alpha-hemolysin (hly) from Staphylococcus aureus (strain NCTC 8325 / PS 47).